Here is a 581-residue protein sequence, read N- to C-terminus: Frizzled-10 (581 aa).

The signal sequence occupies residues 1–20 (MQRPGPRLWLVLQVMGSCAA). Topologically, residues 21–225 (ISSMDMERPG…DVYWSREDKR (205 aa)) are extracellular. The FZ domain maps to 29–150 (PGDGKCQPIE…NDPNYLCMEA (122 aa)). Cystine bridges form between cysteine 34–cysteine 95, cysteine 42–cysteine 88, cysteine 79–cysteine 117, cysteine 106–cysteine 147, and cysteine 110–cysteine 134. Asparagine 48 is a glycosylation site (N-linked (GlcNAc...) asparagine). Asparagine 153 is a glycosylation site (N-linked (GlcNAc...) asparagine). A helical transmembrane segment spans residues 226–246 (FAVVWLAIWAVLCFFSSAFTV). The Cytoplasmic portion of the chain corresponds to 247-262 (LTFLIDPARFRYPERP). Residues 263–283 (IIFLSMCYCVYSVGYLIRLFA) traverse the membrane as a helical segment. Residues 284–311 (GAESIACDRDSGQLYVIQEGLESTGCTL) lie on the Extracellular side of the membrane. Residues 312–332 (VFLVLYYFGMASSLWWVVLTL) form a helical membrane-spanning segment. Topologically, residues 333–351 (TWFLAAGKKWGHEAIEANS) are cytoplasmic. A helical transmembrane segment spans residues 352 to 372 (SYFHLAAWAIPAVKTILILVM). The Extracellular portion of the chain corresponds to 373–393 (RRVAGDELTGVCYVGSMDVNA). A helical transmembrane segment spans residues 394 to 414 (LTGFVLIPLACYLVIGTSFIL). Over 415 to 443 (SGFVALFHIRRVMKTGGENTDKLEKLMVR) the chain is Cytoplasmic. Residues 444-464 (IGLFSVLYTVPATCVIACYFY) traverse the membrane as a helical segment. Residues 465–502 (ERLNMDYWKILAAQHKCKMNNQTKTLDCLMAASIPAVE) lie on the Extracellular side of the membrane. N-linked (GlcNAc...) asparagine glycosylation is present at asparagine 485. The chain crosses the membrane as a helical span at residues 503–523 (IFMVKIFMLLVVGITSGMWIW). Residues 524–581 (TSKTLQSWQQVCSRRLKKKSRRKPASVITSGGIYKKAQHPQKTHHGKYEIPAQSPTCV) are Cytoplasmic-facing. A Lys-Thr-X-X-X-Trp motif, mediates interaction with the PDZ domain of Dvl family members motif is present at residues 526–531 (KTLQSW). The tract at residues 560 to 581 (AQHPQKTHHGKYEIPAQSPTCV) is disordered. The PDZ-binding signature appears at 579-581 (TCV).

This sequence belongs to the G-protein coupled receptor Fz/Smo family. Interacts with WNT7B. Interacts with MYOC. Ubiquitinated by ZNRF3, leading to its degradation by the proteasome. As to expression, highest levels in the placenta and fetal kidney, followed by fetal lung and brain. In adult brain, abundantly expressed in the cerebellum, followed by cerebral cortex, medulla and spinal cord; very low levels in total brain, frontal lobe, temporal lobe and putamen. Weak expression detected in adult brain, heart, lung, skeletal muscle, pancreas, spleen and prostate.

It is found in the cell membrane. In terms of biological role, receptor for Wnt proteins. Functions in the canonical Wnt/beta-catenin signaling pathway. The canonical Wnt/beta-catenin signaling pathway leads to the activation of disheveled proteins, inhibition of GSK-3 kinase, nuclear accumulation of beta-catenin and activation of Wnt target genes. A second signaling pathway involving PKC and calcium fluxes has been seen for some family members, but it is not yet clear if it represents a distinct pathway or if it can be integrated in the canonical pathway, as PKC seems to be required for Wnt-mediated inactivation of GSK-3 kinase. Both pathways seem to involve interactions with G-proteins. May be involved in transduction and intercellular transmission of polarity information during tissue morphogenesis and/or in differentiated tissues. The polypeptide is Frizzled-10 (FZD10) (Homo sapiens (Human)).